We begin with the raw amino-acid sequence, 164 residues long: Inner membrane assembly complex subunit 17 (164 aa).

The N-terminal 28 residues, 1–28 (MIKTAKISTLRLAITRNARNLSFTTLVR), are a transit peptide targeting the mitochondrion. Topologically, residues 29 to 97 (SPEVDNSKIK…NEVPLKRFTR (69 aa)) are mitochondrial matrix. Residues 98 to 118 (PLWIFILMASTFYLGAHLVWW) form a helical membrane-spanning segment. At 119-164 (KLAYEKKEVELKHKVDSLETTLKDVMKEKATGPTPCNNKKSWYKFW) the chain is on the mitochondrial intermembrane side. The stretch at 121 to 149 (AYEKKEVELKHKVDSLETTLKDVMKEKAT) forms a coiled coil.

Belongs to the INA17 family. Component of the inner membrane assembly (INA) complex, composed of INA17 and INA22. Interacts with a subset of F(1)F(0)-ATP synthase subunits of the F(1)-domain and the peripheral stalk.

Its subcellular location is the mitochondrion inner membrane. In terms of biological role, component of the INA complex (INAC) that promotes the biogenesis of mitochondrial F(1)F(0)-ATP synthase. INAC facilitates the assembly of the peripheral stalk and promotes the assembly of the catalytic F(1)-domain with the membrane-embedded F(0)-domain. The protein is Inner membrane assembly complex subunit 17 of Candida glabrata (strain ATCC 2001 / BCRC 20586 / JCM 3761 / NBRC 0622 / NRRL Y-65 / CBS 138) (Yeast).